Here is a 162-residue protein sequence, read N- to C-terminus: Phosphopantetheine adenylyltransferase (162 aa).

Thr10 serves as a coordination point for substrate. ATP is bound by residues 10-11 and His18; that span reads TF. Substrate is bound by residues Lys42, Met74, and Arg88. ATP contacts are provided by residues 89 to 91, Glu99, and 124 to 130; these read GLR and YAFLSST.

It belongs to the bacterial CoaD family. As to quaternary structure, homohexamer. It depends on Mg(2+) as a cofactor.

The protein resides in the cytoplasm. The enzyme catalyses (R)-4'-phosphopantetheine + ATP + H(+) = 3'-dephospho-CoA + diphosphate. Its pathway is cofactor biosynthesis; coenzyme A biosynthesis; CoA from (R)-pantothenate: step 4/5. Functionally, reversibly transfers an adenylyl group from ATP to 4'-phosphopantetheine, yielding dephospho-CoA (dPCoA) and pyrophosphate. The sequence is that of Phosphopantetheine adenylyltransferase from Aliivibrio fischeri (strain ATCC 700601 / ES114) (Vibrio fischeri).